A 540-amino-acid polypeptide reads, in one-letter code: Chaperonin GroEL (540 aa).

Residues 30-33 (TLGP), K51, 87-91 (DGTTT), G415, and D495 each bind ATP.

The protein belongs to the chaperonin (HSP60) family. In terms of assembly, forms a cylinder of 14 subunits composed of two heptameric rings stacked back-to-back. Interacts with the co-chaperonin GroES.

Its subcellular location is the cytoplasm. It catalyses the reaction ATP + H2O + a folded polypeptide = ADP + phosphate + an unfolded polypeptide.. Its function is as follows. Together with its co-chaperonin GroES, plays an essential role in assisting protein folding. The GroEL-GroES system forms a nano-cage that allows encapsulation of the non-native substrate proteins and provides a physical environment optimized to promote and accelerate protein folding. This Serratia ficaria protein is Chaperonin GroEL.